Consider the following 403-residue polypeptide: Queuine tRNA-ribosyltransferase catalytic subunit 1 (403 aa).

N-acetylalanine is present on A2. D105 (proton acceptor) is an active-site residue. 105-109 is a binding site for queuine; it reads DSGGF. S139 carries the phosphoserine modification. Queuine contacts are provided by D159, Q202, and G229. The segment at 260-266 is RNA binding; the sequence is GVGYATD. Catalysis depends on D279, which acts as the Nucleophile. The tract at residues 284 to 288 is RNA binding; important for wobble base 34 recognition; that stretch reads TRTAR. Positions 317, 319, 322, and 348 each coordinate Zn(2+).

This sequence belongs to the queuine tRNA-ribosyltransferase family. As to quaternary structure, heterodimer of a catalytic subunit QTRT1 and an accessory subunit QTRT2. Zn(2+) is required as a cofactor.

It is found in the cytoplasm. Its subcellular location is the mitochondrion outer membrane. The enzyme catalyses guanosine(34) in tRNA + queuine = queuosine(34) in tRNA + guanine. Catalytic subunit of the queuine tRNA-ribosyltransferase (TGT) that catalyzes the base-exchange of a guanine (G) residue with queuine (Q) at position 34 (anticodon wobble position) in tRNAs with GU(N) anticodons (tRNA-Asp, -Asn, -His and -Tyr), resulting in the hypermodified nucleoside queuosine (7-(((4,5-cis-dihydroxy-2-cyclopenten-1-yl)amino)methyl)-7-deazaguanosine). Catalysis occurs through a double-displacement mechanism. The nucleophile active site attacks the C1' of nucleotide 34 to detach the guanine base from the RNA, forming a covalent enzyme-RNA intermediate. The proton acceptor active site deprotonates the incoming queuine, allowing a nucleophilic attack on the C1' of the ribose to form the product. This chain is Queuine tRNA-ribosyltransferase catalytic subunit 1, found in Rattus norvegicus (Rat).